Consider the following 477-residue polypeptide: MSPQTETKASVGFKAGVKDYKLTYYTPDYQTKDTDILAAFRVTPQPGVPPEEAGAAVAAESSTGTWTTVWTDGLTSLDRYKGRCYGLEPVPGEENQYIAYVAYPLDLFEEGSVTNMFTSIVGNVFGFKALRALRLEDLRVPPAYSKTFQGPPHGIQVERDKLNKYGRPLLGCTIKPKLGLSAKNYGRAVYECLRGGLDFTKDDENVNSQPFMRWRDRFLFCAEAIYKAQAETGEIKGHYLNATAGTCEEMIKRAVCARELGVPIVMHDYLTGGFTANTSLAHYCRDNGLLLHIHRAMHAVIDRQKNHGMHFRVLAKALRLSGGDHIHAGTVVGKLEGERDITLGFVDLLRDDFIEKDRSRGIYFTQDWVSLPGVLPVASGGIHVWHMPALTEIFGDDSVLQFGGGTLGHPWGNAPGAVANRVALEACVQARNEGRDLAREGNDIIREASKWSPELAAACEVWKEIKFEFAAVDTLDK.

Residues 1-2 (MS) constitute a propeptide that is removed on maturation. An N-acetylproline modification is found at Pro-3. Residue Lys-14 is modified to N6,N6,N6-trimethyllysine. Positions 123 and 173 each coordinate substrate. Lys-175 (proton acceptor) is an active-site residue. Lys-177 serves as a coordination point for substrate. Mg(2+)-binding residues include Lys-201, Asp-203, and Glu-204. Lys-201 is modified (N6-carboxylysine). His-294 (proton acceptor) is an active-site residue. Positions 295, 327, and 379 each coordinate substrate.

The protein belongs to the RuBisCO large chain family. Type I subfamily. Heterohexadecamer of 8 large chains and 8 small chains; disulfide-linked. The disulfide link is formed within the large subunit homodimers. The cofactor is Mg(2+). The disulfide bond which can form in the large chain dimeric partners within the hexadecamer appears to be associated with oxidative stress and protein turnover.

It localises to the plastid. It is found in the chloroplast. It catalyses the reaction 2 (2R)-3-phosphoglycerate + 2 H(+) = D-ribulose 1,5-bisphosphate + CO2 + H2O. The catalysed reaction is D-ribulose 1,5-bisphosphate + O2 = 2-phosphoglycolate + (2R)-3-phosphoglycerate + 2 H(+). RuBisCO catalyzes two reactions: the carboxylation of D-ribulose 1,5-bisphosphate, the primary event in carbon dioxide fixation, as well as the oxidative fragmentation of the pentose substrate in the photorespiration process. Both reactions occur simultaneously and in competition at the same active site. This is Ribulose bisphosphate carboxylase large chain from Manihot esculenta (Cassava).